A 421-amino-acid chain; its full sequence is Periplasmic [Fe] hydrogenase large subunit (421 aa).

4Fe-4S ferredoxin-type domains follow at residues 26–57 (HFVQ…MGEP) and 59–86 (SIPH…EAQS). [4Fe-4S] cluster is bound by residues Cys35, Cys38, Cys41, Cys45, Cys66, Cys69, Cys72, Cys76, Cys179, Cys234, Cys378, and Cys382. Cys382 contacts Fe(2+).

Heterodimer of a large and a small subunit. [4Fe-4S] cluster is required as a cofactor. Requires Fe(2+) as cofactor.

It is found in the periplasm. The enzyme catalyses H2 + 2 oxidized [2Fe-2S]-[ferredoxin] = 2 reduced [2Fe-2S]-[ferredoxin] + 2 H(+). Functionally, may be involved in hydrogen uptake for the reduction of sulfate to hydrogen sulfide in an electron transport chain. Cytochrome c3 is likely to be the physiological electron carrier for the enzyme. The chain is Periplasmic [Fe] hydrogenase large subunit (hydA) from Nitratidesulfovibrio vulgaris (strain ATCC 29579 / DSM 644 / CCUG 34227 / NCIMB 8303 / VKM B-1760 / Hildenborough) (Desulfovibrio vulgaris).